Consider the following 318-residue polypeptide: Probable tyrosine phosphatase protein N1 (318 aa).

The 267-residue stretch at Ile26 to Leu292 folds into the Tyrosine-protein phosphatase domain. Residue Cys233 is the Phosphocysteine intermediate of the active site.

This sequence belongs to the protein-tyrosine phosphatase family.

The enzyme catalyses O-phospho-L-tyrosyl-[protein] + H2O = L-tyrosyl-[protein] + phosphate. The polypeptide is Probable tyrosine phosphatase protein N1 (N3) (Microplitis demolitor bracovirus (isolate Webb) (MdBV)).